A 378-amino-acid polypeptide reads, in one-letter code: MDSPQVARTLVDSAGGTAAHTREAIRQIGVPETAAFLADELAGRTETVTIRHAAEVQFVFDDRYAPDAADPVPWTFRVGPEGVTHRAGALPDPGAVVTQDLTELARSLYGPAADRSDATRTVWWRDHDDPRVYFDPPPVFPAVERLLAAADGRDVPGLAGLALRHGSDKWGIHTYTAAYEQHFAPFRDRAVTVVEIGVGGYDDPAAGGGSLRMWKRYFRRGLVYGVDIADKSRHREPRVHTVVADQSDPASLRDLADAIGPIDIVIDDGSHISAHVVTAFSTLFPRLNPGGLYVVEDLQTSYWPAFQGAYDDDTRTSVGFLKRLVDGLHHAEYPSRAGRPAQPTDRTVGSLHFHPNLAFVEKRANSGHGGISRLREAT.

S-adenosyl-L-methionine-binding positions include 195–201, serine 210, aspartate 227, 245–246, and aspartate 268; these read EIGVGGY and DQ. Position 268 (aspartate 268) interacts with Mg(2+). The Proton acceptor role is filled by histidine 271. Mg(2+)-binding residues include glutamate 296 and aspartate 297.

This sequence belongs to the methyltransferase OleY/MycE family. Mg(2+) serves as cofactor.

It carries out the reaction 8-demethyl-8-alpha-L-rhamnosyl-tetracenomycin C + S-adenosyl-L-methionine = 8-demethyl-8-(2-O-methyl-alpha-L-rhamnosyl)-tetracenomycin C + S-adenosyl-L-homocysteine + H(+). It participates in antibiotic biosynthesis. Functionally, O-methyltransferase involved in the biosynthesis of the permethylated L-rhamnose moiety of elloramycin, an antitumor polyketide. Mediates the methylation of the hydroxy groups at the 2'-position after the sugar moiety has been attached to the aglycon. This Streptomyces olivaceus protein is 8-demethyl-8-alpha-L-rhamnosyl tetracenomycin-C 2'-O-methyltransferase.